Reading from the N-terminus, the 173-residue chain is ATP synthase subunit b (173 aa).

Residues 12 to 32 form a helical membrane-spanning segment; it reads LDVNPGLVVWTLITFLVVVLV.

Belongs to the ATPase B chain family. F-type ATPases have 2 components, F(1) - the catalytic core - and F(0) - the membrane proton channel. F(1) has five subunits: alpha(3), beta(3), gamma(1), delta(1), epsilon(1). F(0) has three main subunits: a(1), b(2) and c(10-14). The alpha and beta chains form an alternating ring which encloses part of the gamma chain. F(1) is attached to F(0) by a central stalk formed by the gamma and epsilon chains, while a peripheral stalk is formed by the delta and b chains.

The protein resides in the cell inner membrane. Functionally, f(1)F(0) ATP synthase produces ATP from ADP in the presence of a proton or sodium gradient. F-type ATPases consist of two structural domains, F(1) containing the extramembraneous catalytic core and F(0) containing the membrane proton channel, linked together by a central stalk and a peripheral stalk. During catalysis, ATP synthesis in the catalytic domain of F(1) is coupled via a rotary mechanism of the central stalk subunits to proton translocation. In terms of biological role, component of the F(0) channel, it forms part of the peripheral stalk, linking F(1) to F(0). This is ATP synthase subunit b from Leptospira borgpetersenii serovar Hardjo-bovis (strain JB197).